The chain runs to 455 residues: Zinc finger SWIM domain-containing protein 1 (455 aa).

Residues Ala264–Thr288 form a disordered region. An SWIM-type zinc finger spans residues Met333–Gln375.

This is Zinc finger SWIM domain-containing protein 1 (Zswim1) from Mus musculus (Mouse).